A 147-amino-acid chain; its full sequence is MKIVIQRVKRAQVSIDQQLRSSIGQGLLLLVGVGPDDSQEDMDYAVRKIVNMRIFSDAEGKMNLSIKDIDGEILSISQFTLHADTKKGNRPAFVKAAPPEMASNFYDAFNLALQQEVPTRTGIFGADMQVELVNDGPVTIILDTKNR.

Positions 136–137 (GP) match the Gly-cisPro motif, important for rejection of L-amino acids motif.

It belongs to the DTD family. As to quaternary structure, homodimer.

The protein resides in the cytoplasm. It catalyses the reaction glycyl-tRNA(Ala) + H2O = tRNA(Ala) + glycine + H(+). It carries out the reaction a D-aminoacyl-tRNA + H2O = a tRNA + a D-alpha-amino acid + H(+). Its function is as follows. An aminoacyl-tRNA editing enzyme that deacylates mischarged D-aminoacyl-tRNAs. Also deacylates mischarged glycyl-tRNA(Ala), protecting cells against glycine mischarging by AlaRS. Acts via tRNA-based rather than protein-based catalysis; rejects L-amino acids rather than detecting D-amino acids in the active site. By recycling D-aminoacyl-tRNA to D-amino acids and free tRNA molecules, this enzyme counteracts the toxicity associated with the formation of D-aminoacyl-tRNA entities in vivo and helps enforce protein L-homochirality. The protein is D-aminoacyl-tRNA deacylase of Streptococcus sanguinis (strain SK36).